Consider the following 454-residue polypeptide: Protein odr-4 homolog (454 aa).

2 helical membrane passes run M82 to N102 and I432 to F452.

The protein belongs to the ODR-4 family.

It is found in the membrane. Functionally, may play a role in the trafficking of a subset of G-protein coupled receptors. This is Protein odr-4 homolog (ODR4) from Pongo abelii (Sumatran orangutan).